The chain runs to 686 residues: Phosphatidylinositol 4,5-bisphosphate-binding protein SLM1 (686 aa).

Residues 33 to 147 form a disordered region; the sequence is RSMTSADHAN…KQLQGKNSLT (115 aa). A compositionally biased stretch (low complexity) spans 45-63; sequence QQQQQQQQQQQQQQQQQQQ. Polar residues predominate over residues 64-126; the sequence is SASFQNGSLT…PNIDSNTNVT (63 aa). A compositionally biased stretch (low complexity) spans 133–144; that stretch reads NNNNGKQLQGKN. 3 positions are modified to phosphoserine: S145, S150, and S153. Residues 157–172 show a composition bias toward low complexity; the sequence is SSLQRQRLAQQQQQQQ. The segment at 157–176 is disordered; the sequence is SSLQRQRLAQQQQQQQDPRS. Residues 296-381 are a coiled coil; sequence RLEDLRRDLI…FLHEAFDNLE (86 aa). Residues 468–581 enclose the PH domain; it reads YEIKSGFLER…WFDNLKILTS (114 aa). Residues 626 to 669 form a disordered region; that stretch reads VENDENDDINSNYVGSTVTPKLDNQTNTNTSMSSLPDTNDSELQ. Residues 634-663 show a composition bias toward polar residues; sequence INSNYVGSTVTPKLDNQTNTNTSMSSLPDT. The PXIXIT-like, required for interaction with CNA1 and CNA2, and calcineurin-dependent dephosphorylation signature appears at 673-678; the sequence is PNIYIQ.

As to quaternary structure, heterodimer of SLM1-SLM2. Binds phosphatidylinositol 4,5-bisphosphate, which is required for function. Interacts with the TORC2 subunits AVO2, BIT61 and TOR2. Interacts with the calcineurin catalytic subunits CNA1 and CNA2. Post-translationally, phosphorylated by the target of rapamycin complex 2 (TORC2) and dephosphorylated by serine/threonine-protein phosphatase 2B (calcineurin). Dephosphorylated in response to the disruption or inhibition of sphingolipid synthesis.

Its subcellular location is the cell membrane. Together with SLM2, acts as an effector of the TORC2- and calcineurin-signaling pathways. Phosphorylated and activated by TORC2 under favorable growth conditions. Mediates actin polarization via inhibition of calcineurin-dependent transcription. Upon nutrient limitation or environmental stress, gets dephosphorylated by calcineurin. Dephosphorylation inhibits its interaction with TORC2, thereby antagonizing TORC2 signaling and mediating calcineurin-dependent actin depolarization. May play a role in the response to the disruption of sphingolipid synthesis, where dephosphorylation of SLM1 leads to the activation and phosphorylation of YPK1 through the TORC2 and PKH1 pathways, which in turn phosphorylates ORM1 and LAG1 to activate sphingolipid synthesis. Also functions in heat-induced, calcineurin-mediated uracil permease (FUR4) endocytosis. The protein is Phosphatidylinositol 4,5-bisphosphate-binding protein SLM1 (SLM1) of Saccharomyces cerevisiae (strain ATCC 204508 / S288c) (Baker's yeast).